Consider the following 307-residue polypeptide: MLVKGNEILLKAHKEGYGVGAFNFVNFEMLNAIFEAGNEENSPLFIQASEGAIKYMGIDMAVGMVKIMCERYPHIPVALHLDHGTTFESCEKAVKAGFTSVMIDASHHAFEENLELTSKVVKMAHNAGVSVEAELGRLMGIEDNISVDEKDAVLVNPKEAERFVKESQVDYLAPAIGTSHGAFKFKGEPKLDFERLQEVKRLTNIPLVLHGASAIPDDVRKSYLDAGGDLKGSKGVPFEFLQESIKGGINKVNTDTDLRIAFIAEVRKVANEDKSQFDLRKFFSPAQLALKNVVKERMKLLGSANKI.

D-glyceraldehyde 3-phosphate is bound at residue S49. D82 serves as the catalytic Proton donor. H83, D104, E134, and H180 together coordinate Zn(2+). G181 is a dihydroxyacetone phosphate binding site. H210 is a binding site for Zn(2+). Dihydroxyacetone phosphate contacts are provided by residues 211 to 213 (GAS) and 253 to 256 (NTDT).

It belongs to the class II fructose-bisphosphate aldolase family. In terms of assembly, homodimer. Zn(2+) is required as a cofactor.

The catalysed reaction is beta-D-fructose 1,6-bisphosphate = D-glyceraldehyde 3-phosphate + dihydroxyacetone phosphate. Its pathway is carbohydrate degradation; glycolysis; D-glyceraldehyde 3-phosphate and glycerone phosphate from D-glucose: step 4/4. Catalyzes the aldol condensation of dihydroxyacetone phosphate (DHAP or glycerone-phosphate) with glyceraldehyde 3-phosphate (G3P) to form fructose 1,6-bisphosphate (FBP) in gluconeogenesis and the reverse reaction in glycolysis. In Helicobacter pylori (strain J99 / ATCC 700824) (Campylobacter pylori J99), this protein is Fructose-bisphosphate aldolase (fba).